The following is a 420-amino-acid chain: MKFQKLKGTRDYYFQDSNKLEIIRNAFFTSAKKFNFSFLETPIIENVELFKRTSGDFSDLVKKELYSFEDKSKRQIALRPEGTAPALRAIVENNLLQKHNKFFYFGPMFRYENPQKGRQRQFFSGGIEWLEKQSPFTNIEIIFFAKNFLDTLKIDDYEIVINWIGHPEQRKNYLDHLKNYLNQFENQLEEISKERLKNNALRILDDKIESQKAFVKNAPKIHDFLPKESLENFYQLQDLFKKFDIKFKVDPFLVRGLDYYSDFVFEFVSTNQNLGAQKTLLGGGVYSSLLKELGGENIEGIGFGFGLERIMEVIDLNNFKDDAKKITAFASNEDDLIALLKLRNNFGDLIKIDCINKVVNFKKIFKSKQIKESDFLIFKELNNAQNEVSLKNKFNDQKLVVDLINPNIENIKKYIKENSD.

This sequence belongs to the class-II aminoacyl-tRNA synthetase family. As to quaternary structure, homodimer.

It localises to the cytoplasm. It carries out the reaction tRNA(His) + L-histidine + ATP = L-histidyl-tRNA(His) + AMP + diphosphate + H(+). This is Histidine--tRNA ligase (hisS) from Mycoplasmopsis pulmonis (strain UAB CTIP) (Mycoplasma pulmonis).